The sequence spans 121 residues: Large ribosomal subunit protein bL17 (121 aa).

This sequence belongs to the bacterial ribosomal protein bL17 family. Part of the 50S ribosomal subunit. Contacts protein L32.

In Rubrobacter xylanophilus (strain DSM 9941 / JCM 11954 / NBRC 16129 / PRD-1), this protein is Large ribosomal subunit protein bL17.